A 262-amino-acid chain; its full sequence is Ribose-5-phosphate isomerase A (262 aa).

Substrate is bound by residues 33–36 (TGST), 89–92 (DGTD), and 102–105 (KGGG). The active-site Proton acceptor is the E111. Residue K129 participates in substrate binding.

Belongs to the ribose 5-phosphate isomerase family. As to quaternary structure, homodimer.

It catalyses the reaction aldehydo-D-ribose 5-phosphate = D-ribulose 5-phosphate. It participates in carbohydrate degradation; pentose phosphate pathway; D-ribose 5-phosphate from D-ribulose 5-phosphate (non-oxidative stage): step 1/1. Catalyzes the reversible conversion of ribose-5-phosphate to ribulose 5-phosphate. The polypeptide is Ribose-5-phosphate isomerase A (Jannaschia sp. (strain CCS1)).